We begin with the raw amino-acid sequence, 838 residues long: MTGAEIEPSAQAKPEKKAGEEVIAGPERENDVPLVVRPKVRTQATTGARPKTETKSVPAARPKTEAQAMSGARPKTEVQVMGGARPKTEAQGITGARPKTDARAVGGARSKTDAKAIPGARPKDEAQAWAQSEFGTEAVSQAEGVSQTNAVAWPLATAESGSVTKSKGLSMDRELVNVDAETFPGTQGQKGIQPWFGPGEETNMGSWCYSRPRAREEASNESGFWSADETSTASSFWTGEETSVRSWPREESNTRSRHRAKHQTNPRSRPRSKQEAYVDSWSGSEDEASNPFSFWVGENTNNLFRPRVREEANIRSKLRTNREDCFESESEDEFYKQSWVLPGEEANSRFRHRDKEDPNTALKLRAQKDVDSDRVKQEPRFEEEVIIGSWFWAEKEASLEGGASAICESEPGTEEGAIGGSAYWAEEKSSLGAVAREEAKPESEEEAIFGSWFWDRDEACFDLNPCPVYKVSDRFRDAAEELNASSRPQTWDEVTVEFKPGLFHGVGFRSTSPFGIPEEASEMLEAKPKNLELSPEGEEQESLLQPDQPSPEFTFQYDPSYRSVREIREHLRARESAESESWSCSCIQCELKIGSEEFEEFLLLMDKIRDPFIHEISKIAMGMRSASQFTRDFIRDSGVVSLIETLLNYPSSRVRTSFLENMIHMAPPYPNLNMIETFICQVCEETLAHSVDSLEQLTGIRMLRHLTMTIDYHTLIANYMSGFLSLLTTANARTKFHVLKMLLNLSENPAVAKKLFSAKALSIFVGLFNIEETNDNIQIVIKMFQNISNIIKSGKMSLIDDDFSLEPLISAFREFEELAKQLQAQIDNQNDPEVGQQS.

4 disordered regions span residues 1-122 (MTGA…GARP), 218-292 (ASNE…SNPF), 349-368 (RFRH…RAQK), and 531-552 (LELS…PSPE). Positions 13-31 (KPEKKAGEEVIAGPEREND) are enriched in basic and acidic residues. A compositionally biased stretch (polar residues) spans 220–245 (NESGFWSADETSTASSFWTGEETSVR). The span at 255–271 (RSRHRAKHQTNPRSRPR) shows a compositional bias: basic residues. Phosphoserine occurs at positions 282 and 284. Residues 542–552 (SLLQPDQPSPE) are compositionally biased toward polar residues.

The protein belongs to the GPRASP family. As to quaternary structure, interacts with cytoplasmic tails of a variety of G-protein coupled receptors such as muscarinic acetylcholine receptor M1/CHRM1 and calcitonin receptor/CALCR. As to expression, expressed in the brain.

Functionally, may play a role in regulation of a variety of G-protein coupled receptors. In Homo sapiens (Human), this protein is G-protein coupled receptor-associated sorting protein 2 (GPRASP2).